The chain runs to 373 residues: tRNA-specific 2-thiouridylase MnmA (373 aa).

ATP-binding positions include 12-19 (GMSGGVDS) and Met38. The interaction with target base in tRNA stretch occupies residues 98 to 100 (NPD). The active-site Nucleophile is Cys103. A disulfide bridge connects residues Cys103 and Cys200. Gly127 is an ATP binding site. The interval 150-152 (KDQ) is interaction with tRNA. Catalysis depends on Cys200, which acts as the Cysteine persulfide intermediate. The segment at 312-313 (RY) is interaction with tRNA.

The protein belongs to the MnmA/TRMU family.

The protein localises to the cytoplasm. The catalysed reaction is S-sulfanyl-L-cysteinyl-[protein] + uridine(34) in tRNA + AH2 + ATP = 2-thiouridine(34) in tRNA + L-cysteinyl-[protein] + A + AMP + diphosphate + H(+). Its function is as follows. Catalyzes the 2-thiolation of uridine at the wobble position (U34) of tRNA, leading to the formation of s(2)U34. This chain is tRNA-specific 2-thiouridylase MnmA, found in Streptococcus pneumoniae (strain P1031).